Reading from the N-terminus, the 484-residue chain is MTKSLLSLAVTAFILGGCSLIPDYQTPEAPVAAQWPQGPAYSPTQSADVAAAEQGWRQFFHDPALQQLIQTSLVNNRDLRVAALNLDAYRAQYRIQRADLFPAVSATGSGSRQRVPANMSQTGESGITSQYSATLGVSAYELDLFGRVRSLTEQALETYLSSEQARRSTQIALVASVANAYYTWQADQALFKLTEETLKTYEESYNLTRRSNEVGVASALDVSQARTAVEGARVKYSQYQRLVAQDVNSLTVLLGTGIPADLAKPLELDADQLAEVPAGLPSDILQRRPDIQEAEHLLKAANANIGAARAAFFPSISLTANAGSLSPDMGHLFAGGQGTWLFQPQINLPIFNAGSLKASLDYSKIQKDINVAKYEKTIQTAFQEVSDGLAARKTFEEQLQAQRDLVQANQDYYRLAERRYRIGIDSNLTFLDAQRNLFSAQQALIGDRLSQLTSEVNLYKALGGGWYEQTGQANQQASVETPKG.

An N-terminal signal peptide occupies residues 1-17; the sequence is MTKSLLSLAVTAFILGG. A lipid anchor (N-palmitoyl cysteine) is attached at C18. A lipid anchor (S-diacylglycerol cysteine) is attached at C18.

The protein belongs to the outer membrane factor (OMF) (TC 1.B.17) family.

The protein resides in the cell outer membrane. Functionally, the outer membrane component of a constitutive organic solvent efflux system. Is involved in export of toluene, styrene, m-xylene, propylbenzene and ethylbenzene. Also exports AMP and the antibiotics carbenicillin, nalidixic acid, chloramphenicol and tetracycline. The sequence is that of Toluene efflux pump outer membrane protein TtgC (ttgC) from Pseudomonas putida (strain DOT-T1E).